The following is a 940-amino-acid chain: MSLYSAEDILKWLHHAQAEFLTALAEGDDALAQFQAQWDRVRACVDCDPTLPSSTLALSHAVGISIAQIAEVMLDQEATNHTIEDELTKDLLAGLERHDASSALADEKTGAELSATPLPPYIEPCYRWLVNHLDNPYPTKAIKEELLDQARQRTSPDVAQHLALGDIDNWFIAARARMGWGDIRRRLFGGSRSLMLQSTRLMWGTEETSRDFTDGCIAKRKGAQPKREEVQPHLRSSHDVVAFKIPPKASPYFLITDSSTAACEEPLHPQSFAALQPDVEFALAHLEVNAKEMYGLEPTELADSLNSSAVDRQFATQDLVAFRAALEAATAAKQRQARREQRRAQKDRMDAQRRAEDRKCYPSPEPLSADELSGTESDEDLDDFYASDDASDDEDDDGEDLDTRPSDLMAQMCPQLVATAFSKDGSATEDEDSNSDDTDESTDDEDEDSDSENDSDSEDEEEEDEEEEEPVKIAGAKRGRNDDEEVSPLAKKPRIFSPPVRPRPQAIRVSLPSPAPSSRGSTPTSPVSPSPKAKRPAQATSLLASHPMKKREKLQEELRKAGLAPPSAPVLMGPDGVPLGTVRSRSSPSVSSPPSVSVSLPLPSRGVPSGGIKVTGDPTPWVNWDLEAHTQAPRDLTAATKSSAGCSVDAVPLPGKSRSLTRSPSISSISSACSTSSSGSDTDSLFSVTSDATDITEPDEATTADETTTQSTSASSSRDTTSQQKRMPPLSIDPRFDPALWSKYDLSPPADGRLHPSDGLRPSAFVPTKLDVRVANLAQNPARHWSASKRSPTRASHAAAPIVSYHHATGSIASPAQVAFGEGQLTSVLATGQKAGNARRRTTPVQRRVTPKAQETSEPSSLVDGILSSGLADVCREAPKPAKAPKNDRRYLERRERRLSKSSPVDSADTVRTRLAEIEQEAARLEAERQSLQRLASVGG.

The segment at residues 110 to 182 (GAELSATPLP…AARARMGWGD (73 aa)) is a DNA-binding region (homeobox; TALE-type). Disordered stretches follow at residues 333 to 618 (KQRQ…TGDP), 633 to 762 (PRDL…GLRP), 832 to 863 (GQKA…SSLV), and 877 to 912 (EAPK…DTVR). The span at 337 to 360 (ARREQRRAQKDRMDAQRRAEDRKC) shows a compositional bias: basic and acidic residues. Acidic residues-rich tracts occupy residues 376–400 (ESDE…DGED) and 427–469 (ATED…EEEE). Low complexity-rich tracts occupy residues 516–531 (PSSR…SPSP), 582–611 (VRSR…PSGG), and 657–693 (SRSL…SDAT). The span at 694–703 (DITEPDEATT) shows a compositional bias: acidic residues. Over residues 704-724 (ADETTTQSTSASSSRDTTSQQ) the composition is skewed to low complexity. Basic and acidic residues predominate over residues 877-896 (EAPKPAKAPKNDRRYLERRE).

This sequence belongs to the TALE/M-ATYP homeobox family.

The protein localises to the nucleus. Its function is as follows. Specifies A-alpha-4 mating-type. May regulate the expression of genes specific to the homokaryotic cell type. The polypeptide is Mating-type protein A-alpha Z4 (Schizophyllum commune (Split gill fungus)).